The following is a 120-amino-acid chain: NADH-quinone oxidoreductase subunit A (120 aa).

3 consecutive transmembrane segments (helical) span residues 6 to 26, 63 to 83, and 89 to 109; these read YGII…ALAT, FLYA…YPWA, and LGLF…LGLW.

Belongs to the complex I subunit 3 family. In terms of assembly, NDH-1 is composed of 14 different subunits. Subunits NuoA, H, J, K, L, M, N constitute the membrane sector of the complex.

The protein localises to the cell membrane. The catalysed reaction is a quinone + NADH + 5 H(+)(in) = a quinol + NAD(+) + 4 H(+)(out). NDH-1 shuttles electrons from NADH, via FMN and iron-sulfur (Fe-S) centers, to quinones in the respiratory chain. The immediate electron acceptor for the enzyme in this species is believed to be a menaquinone. Couples the redox reaction to proton translocation (for every two electrons transferred, four hydrogen ions are translocated across the cytoplasmic membrane), and thus conserves the redox energy in a proton gradient. This is NADH-quinone oxidoreductase subunit A from Moorella thermoacetica (strain ATCC 39073 / JCM 9320).